We begin with the raw amino-acid sequence, 284 residues long: Pantothenate synthetase (284 aa).

31–38 lines the ATP pocket; the sequence is MGNLHAGH. The Proton donor role is filled by His38. Gln62 provides a ligand contact to (R)-pantoate. Gln62 lines the beta-alanine pocket. 150 to 153 provides a ligand contact to ATP; the sequence is GKKD. Gln156 contacts (R)-pantoate. ATP contacts are provided by residues Val179 and 187–190; that span reads MSSR.

It belongs to the pantothenate synthetase family. In terms of assembly, homodimer.

The protein localises to the cytoplasm. It catalyses the reaction (R)-pantoate + beta-alanine + ATP = (R)-pantothenate + AMP + diphosphate + H(+). The protein operates within cofactor biosynthesis; (R)-pantothenate biosynthesis; (R)-pantothenate from (R)-pantoate and beta-alanine: step 1/1. Catalyzes the condensation of pantoate with beta-alanine in an ATP-dependent reaction via a pantoyl-adenylate intermediate. In Xanthomonas campestris pv. campestris (strain 8004), this protein is Pantothenate synthetase.